Reading from the N-terminus, the 189-residue chain is Large ribosomal subunit protein bL9 (189 aa).

It belongs to the bacterial ribosomal protein bL9 family.

Its function is as follows. Binds to the 23S rRNA. The protein is Large ribosomal subunit protein bL9 of Brucella ovis (strain ATCC 25840 / 63/290 / NCTC 10512).